The sequence spans 348 residues: Olfactory receptor 2T4 (348 aa).

At 1–57 (MDNITWMASHTGWSDFILMGLFRQSKHPMANITWMANHTGWSDFILLGLFRQSKHPA) the chain is on the extracellular side. N31 and N37 each carry an N-linked (GlcNAc...) asparagine glycan. A helical transmembrane segment spans residues 58–81 (LLCVVIFVVFLMALSGNAVLILLI). Residues 82-89 (HCDAHLHT) are Cytoplasmic-facing. Residues 90–111 (PMYFFISQLSLMDMAYISVTVP) form a helical membrane-spanning segment. Residues 112-132 (KMLLDQVMGVNKISAPECGMQ) lie on the Extracellular side of the membrane. A disulfide bond links C129 and C221. A helical transmembrane segment spans residues 133–152 (MFFYVTLAGSEFFLLATMAY). Residues 153–171 (DRYVAICHPLRYPVLMNHR) are Cytoplasmic-facing. Residues 172–190 (VCLFLSSGCWFLGSVDGFT) form a helical membrane-spanning segment. Residues 191 to 227 (FTPITMTFPFRGSREIHHFFCEVPAVLNLSCSDTSLY) lie on the Extracellular side of the membrane. N218 is a glycosylation site (N-linked (GlcNAc...) asparagine). Residues 228–251 (EIFMYLCCVLMLLIPVVIISSSYL) form a helical membrane-spanning segment. Topologically, residues 252–268 (LILLTIHGMNSAEGRKK) are cytoplasmic. A helical membrane pass occupies residues 269–291 (AFATCSSHLTVVILFYGAAIYTY). The Extracellular portion of the chain corresponds to 292-304 (MLPSSYHTPEKDM). Residues 305-324 (MVSVFYTILTPVVNPLIYSL) traverse the membrane as a helical segment. Topologically, residues 325–348 (RNKDVMGALKKMLTVEPAFQKAME) are cytoplasmic.

It belongs to the G-protein coupled receptor 1 family.

Its subcellular location is the cell membrane. Odorant receptor. The chain is Olfactory receptor 2T4 (OR2T4) from Homo sapiens (Human).